A 94-amino-acid polypeptide reads, in one-letter code: Small ribosomal subunit protein uS19 (94 aa).

This sequence belongs to the universal ribosomal protein uS19 family.

Protein S19 forms a complex with S13 that binds strongly to the 16S ribosomal RNA. The sequence is that of Small ribosomal subunit protein uS19 from Syntrophomonas wolfei subsp. wolfei (strain DSM 2245B / Goettingen).